Reading from the N-terminus, the 224-residue chain is Ribosome maturation factor RimP (224 aa).

The segment at 194 to 224 is disordered; it reads REGRIPGDDLGSEEAGEQSDETASGEAEDKE. The span at 203 to 213 shows a compositional bias: acidic residues; it reads LGSEEAGEQSD.

The protein belongs to the RimP family.

The protein localises to the cytoplasm. Functionally, required for maturation of 30S ribosomal subunits. In Brucella anthropi (strain ATCC 49188 / DSM 6882 / CCUG 24695 / JCM 21032 / LMG 3331 / NBRC 15819 / NCTC 12168 / Alc 37) (Ochrobactrum anthropi), this protein is Ribosome maturation factor RimP.